The following is an 85-amino-acid chain: Alpha-toxin Amm8 (85 aa).

The N-terminal stretch at Met1–Ser19 is a signal peptide. In terms of domain architecture, LCN-type CS-alpha/beta spans Lys21 to Asn83. Disulfide bonds link Cys31-Cys82, Cys35-Cys55, Cys41-Cys65, and Cys45-Cys67. A propeptide (removed by a carboxypeptidase) is located at residue Arg85.

It belongs to the long (4 C-C) scorpion toxin superfamily. Sodium channel inhibitor family. Alpha subfamily. Expressed by the venom gland.

It is found in the secreted. Alpha toxins bind voltage-independently at site-3 of sodium channels (Nav) and inhibit the inactivation of the activated channels, thereby blocking neuronal transmission. The toxin principally slows the inactivation process of TTX-sensitive sodium channels. It discriminates neuronal versus muscular sodium channel, as it is more potent on rat brain Nav1.2/SCN2A (EC(50)=29 nM) than on rat skeletal muscle Nav1.4/SCN4A (EC(50)=416 nM). It also shows a weak activity on Nav1.7/SCN9A (EC(50)=1.76 uM). In vivo, the toxin produces pain hypersensibility to mechanical and thermal stimuli. It also exhibits potent analgesic activity (when injected intraperitoneally), increasing hot plate and tail flick withdrawal latencies in a dose-dependent fashion. This paradoxical analgesic action, is significantly suppressed by opioid receptor antagonists, suggesting a pain-induced analgesia mechanism that involves an endogenous opioid system. This led to hypothesis that pain relief induced by peripheral administration of Amm VIII may result from sensitization of primary afferent neurons and subsequent activation of an opioid-dependent noxious inhibitory control. The protein is Alpha-toxin Amm8 of Androctonus mauritanicus mauritanicus (Scorpion).